A 308-amino-acid polypeptide reads, in one-letter code: Phenylcoumaran benzylic ether reductase PT1 (308 aa).

Residues 11-17 (GATGYIG), R36, and K46 each bind NADP(+). K134 functions as the Proton acceptor in the catalytic mechanism. Residue R138 coordinates NADP(+).

It belongs to the NmrA-type oxidoreductase family. Isoflavone reductase subfamily.

It catalyses the reaction (-)-dehydrodiconiferyl alcohol + NADPH + H(+) = (S)-isodihydrodehydrodiconiferyl alcohol + NADP(+). The catalysed reaction is (+)-dehydrodiconiferyl alcohol + NADPH + H(+) = (R)-isodihydrodehydrodiconiferyl alcohol + NADP(+). The enzyme catalyses (2R,3S)-dihydrodehydrodiconiferyl alcohol + NADPH + H(+) = (S)-tetrahydrodehydrodiconiferyl alcohol + NADP(+). It carries out the reaction (2S,3R)-dihydrodehydrodiconiferyl alcohol + NADPH + H(+) = (R)-tetrahydrodehydrodiconiferyl alcohol + NADP(+). Its function is as follows. Oxidoreductase involved in lignan biosynthesis. Catalyzes the NADPH-dependent reduction of phenylcoumaran benzylic ethers. Converts dehydrodiconiferyl alcohol (DDC) to isodihydrodehydrodiconiferyl alcohol (IDDDC), and dihydrodehydrodiconiferyl alcohol (DDDC) to tetrahydrodehydrodiconiferyl alcohol (TDDC). The sequence is that of Phenylcoumaran benzylic ether reductase PT1 from Pinus taeda (Loblolly pine).